Here is a 328-residue protein sequence, read N- to C-terminus: MSQLDLLNIVHRPRRLRRTAALRNLVQENTLTVNDLVFPLFVMPGTNAVEEVSSMPGSFRFTIDRAVEECKELYDLGIQGIDLFGIPEQKTEDGSEAYNDNGILQQAIRAIKKAVPELCIMTDVALDPFTPFGHDGLVKDGIILNDETVEVLQKMAVSHAEAGADFVSPSDMMDGRIGAIREALDETDHSDVGILSYAAKYASSFYGPFRDALHSAPQFGDKSTYQMNPANTEEAMKEVELDIVEGADIVMVKPGLAYLDIVWRTKERFDVPVAIYHVSGEYAMVKAAAAKGWIDEDRVMMESLLCMKRAGADIIFTYYAKEAAKKLR.

Residue K200 is the Schiff-base intermediate with substrate of the active site. 5-aminolevulinate contacts are provided by R210 and K222. E238 provides a ligand contact to Mg(2+). K253 acts as the Schiff-base intermediate with substrate in catalysis. 5-aminolevulinate contacts are provided by S279 and Y318.

It belongs to the ALAD family. Homooctamer.

It catalyses the reaction 2 5-aminolevulinate = porphobilinogen + 2 H2O + H(+). Its pathway is porphyrin-containing compound metabolism; protoporphyrin-IX biosynthesis; coproporphyrinogen-III from 5-aminolevulinate: step 1/4. Stimulated by magnesium, inhibited by zinc. In terms of biological role, catalyzes an early step in the biosynthesis of tetrapyrroles. Binds two molecules of 5-aminolevulinate per subunit, each at a distinct site, and catalyzes their condensation to form porphobilinogen. This Chlorobaculum parvum (strain DSM 263 / NCIMB 8327) (Chlorobium vibrioforme subsp. thiosulfatophilum) protein is Delta-aminolevulinic acid dehydratase (hemB).